The following is a 138-amino-acid chain: Putative pre-16S rRNA nuclease (138 aa).

Belongs to the YqgF nuclease family.

The protein resides in the cytoplasm. Its function is as follows. Could be a nuclease involved in processing of the 5'-end of pre-16S rRNA. The chain is Putative pre-16S rRNA nuclease from Listeria monocytogenes serovar 1/2a (strain ATCC BAA-679 / EGD-e).